Here is a 794-residue protein sequence, read N- to C-terminus: E3 ubiquitin-protein ligase wwp-1 (794 aa).

The segment covering 1 to 16 has biased composition (low complexity); sequence MARNEPSSQQPSSSGS. Disordered regions lie at residues 1–31 and 155–198; these read MARN…KPSK and RSAG…AAPT. One can recognise a C2 domain in the interval 10–124; the sequence is QPSSSGSNGT…TRNENGEFKN (115 aa). A compositionally biased stretch (polar residues) spans 17-27; sequence NGTPAQQNGSA. Over residues 161-186 the composition is skewed to low complexity; the sequence is AETAASASSEASTSNGVATSSSARRP. WW domains are found at residues 219–252, 253–286, 324–358, and 366–399; these read EQLP…RPST, QPLP…RPTA, GPLP…DPRT, and QPLP…DPRT. The HECT domain maps to 460-794; that stretch reads NAVDLRRRLY…IEMTEGFGNE (335 aa). The active-site Glycyl thioester intermediate is the Cys762.

Interacts (via WW domains) with Kruppel-like factor klf-1. Interacts with ubiquitin-conjugating enzyme E2 ubc-18. As to expression, expressed in neurons localized in the head and tail of adults.

It catalyses the reaction S-ubiquitinyl-[E2 ubiquitin-conjugating enzyme]-L-cysteine + [acceptor protein]-L-lysine = [E2 ubiquitin-conjugating enzyme]-L-cysteine + N(6)-ubiquitinyl-[acceptor protein]-L-lysine.. It functions in the pathway protein modification; protein ubiquitination. E3 ubiquitin-protein ligase which accepts ubiquitin from an E2 ubiquitin-conjugating enzyme in the form of a thioester and then directly transfers the ubiquitin to targeted substrates. Ubiquitinates klf-1. Required for diet restriction-mediated lifespan extension, acting in concert with Kruppel-like factor klf-1 in the intestine to perhaps modulate genes involved in lipid metabolism. Probably acting downstream of the Insulin/IGF-1-like signaling (IIS) mediated pathway, plays a role in the immune response to infection by the Gram-negative bacterium P.aeruginosa, at least partly in response to bacterial pore-forming toxins. The protein is E3 ubiquitin-protein ligase wwp-1 of Caenorhabditis elegans.